The chain runs to 471 residues: Glutamate--tRNA ligase (471 aa).

The short motif at P9–G19 is the 'HIGH' region element. Positions 98, 100, 125, and 127 each coordinate Zn(2+). The short motif at K237–R241 is the 'KMSKS' region element. An ATP-binding site is contributed by K240.

This sequence belongs to the class-I aminoacyl-tRNA synthetase family. Glutamate--tRNA ligase type 1 subfamily. As to quaternary structure, monomer. The cofactor is Zn(2+).

It localises to the cytoplasm. It catalyses the reaction tRNA(Glu) + L-glutamate + ATP = L-glutamyl-tRNA(Glu) + AMP + diphosphate. Its function is as follows. Catalyzes the attachment of glutamate to tRNA(Glu) in a two-step reaction: glutamate is first activated by ATP to form Glu-AMP and then transferred to the acceptor end of tRNA(Glu). This chain is Glutamate--tRNA ligase, found in Aeromonas hydrophila subsp. hydrophila (strain ATCC 7966 / DSM 30187 / BCRC 13018 / CCUG 14551 / JCM 1027 / KCTC 2358 / NCIMB 9240 / NCTC 8049).